We begin with the raw amino-acid sequence, 465 residues long: tRNA modification GTPase MnmE (465 aa).

The (6S)-5-formyl-5,6,7,8-tetrahydrofolate site is built by Arg23, Glu81, and Lys120. One can recognise a TrmE-type G domain in the interval 217–389; sequence GVHVVLAGRP…LIASLCDKVG (173 aa). Asn227 contributes to the K(+) binding site. Residues 227 to 232, 246 to 252, and 271 to 274 each bind GTP; these read NAGKSS, TDVAGTT, and DTAG. Mg(2+) is bound at residue Ser231. Positions 246, 248, and 251 each coordinate K(+). Thr252 provides a ligand contact to Mg(2+). Residue Lys465 participates in (6S)-5-formyl-5,6,7,8-tetrahydrofolate binding.

It belongs to the TRAFAC class TrmE-Era-EngA-EngB-Septin-like GTPase superfamily. TrmE GTPase family. In terms of assembly, homodimer. Heterotetramer of two MnmE and two MnmG subunits. The cofactor is K(+).

It is found in the cytoplasm. Exhibits a very high intrinsic GTPase hydrolysis rate. Involved in the addition of a carboxymethylaminomethyl (cmnm) group at the wobble position (U34) of certain tRNAs, forming tRNA-cmnm(5)s(2)U34. The polypeptide is tRNA modification GTPase MnmE (Psychrobacter sp. (strain PRwf-1)).